We begin with the raw amino-acid sequence, 621 residues long: Bifunctional protein GlmU (621 aa).

The pyrophosphorylase stretch occupies residues 1 to 229 (MAERDLAVAI…AREIVGINDR (229 aa)). Residues 11-14 (LAAG), lysine 25, glutamine 76, and 81-82 (GT) contribute to the UDP-N-acetyl-alpha-D-glucosamine site. Position 106 (aspartate 106) interacts with Mg(2+). Residues glycine 143, glutamate 158, asparagine 173, and asparagine 227 each coordinate UDP-N-acetyl-alpha-D-glucosamine. Asparagine 227 provides a ligand contact to Mg(2+). Residues 230-250 (RQLAQAYQILQDRLKEAWMEA) are linker. Residues 251–621 (GVTFVDPDSV…TGVGIPSCPP (371 aa)) form an N-acetyltransferase region. Residues arginine 332 and lysine 350 each coordinate UDP-N-acetyl-alpha-D-glucosamine. Histidine 362 acts as the Proton acceptor in catalysis. Residues tyrosine 365 and asparagine 376 each coordinate UDP-N-acetyl-alpha-D-glucosamine. Acetyl-CoA-binding positions include alanine 379, 385–386 (NY), alanine 422, and arginine 441. The tract at residues 601–621 (ATPPSPQRADGTGVGIPSCPP) is disordered.

In the N-terminal section; belongs to the N-acetylglucosamine-1-phosphate uridyltransferase family. This sequence in the C-terminal section; belongs to the transferase hexapeptide repeat family. Homotrimer. It depends on Mg(2+) as a cofactor.

The protein resides in the cytoplasm. It carries out the reaction alpha-D-glucosamine 1-phosphate + acetyl-CoA = N-acetyl-alpha-D-glucosamine 1-phosphate + CoA + H(+). It catalyses the reaction N-acetyl-alpha-D-glucosamine 1-phosphate + UTP + H(+) = UDP-N-acetyl-alpha-D-glucosamine + diphosphate. The protein operates within nucleotide-sugar biosynthesis; UDP-N-acetyl-alpha-D-glucosamine biosynthesis; N-acetyl-alpha-D-glucosamine 1-phosphate from alpha-D-glucosamine 6-phosphate (route II): step 2/2. It participates in nucleotide-sugar biosynthesis; UDP-N-acetyl-alpha-D-glucosamine biosynthesis; UDP-N-acetyl-alpha-D-glucosamine from N-acetyl-alpha-D-glucosamine 1-phosphate: step 1/1. Its pathway is bacterial outer membrane biogenesis; LPS lipid A biosynthesis. Its function is as follows. Catalyzes the last two sequential reactions in the de novo biosynthetic pathway for UDP-N-acetylglucosamine (UDP-GlcNAc). The C-terminal domain catalyzes the transfer of acetyl group from acetyl coenzyme A to glucosamine-1-phosphate (GlcN-1-P) to produce N-acetylglucosamine-1-phosphate (GlcNAc-1-P), which is converted into UDP-GlcNAc by the transfer of uridine 5-monophosphate (from uridine 5-triphosphate), a reaction catalyzed by the N-terminal domain. The chain is Bifunctional protein GlmU from Synechococcus sp. (strain JA-3-3Ab) (Cyanobacteria bacterium Yellowstone A-Prime).